The primary structure comprises 359 residues: Mandelate racemase (359 aa).

Residue Lys166 is the Proton acceptor; specific for S-mandelate of the active site. Asp195, Glu221, and Glu247 together coordinate Mg(2+). Residue His297 is the Proton acceptor; specific for R-mandelate of the active site. A substrate-binding site is contributed by Glu317.

Belongs to the mandelate racemase/muconate lactonizing enzyme family. In terms of assembly, homooctamer. Mg(2+) is required as a cofactor.

The enzyme catalyses (S)-mandelate = (R)-mandelate. Its pathway is aromatic compound metabolism; (R)-mandelate degradation; benzoate from (R)-mandelate: step 1/4. This is Mandelate racemase (mdlA) from Pseudomonas putida (Arthrobacter siderocapsulatus).